The chain runs to 177 residues: Parathyroid hormone-related protein (177 aa).

An N-terminal signal peptide occupies residues 1-24 (MLRRLVQQWGVAVFLLSYSVPSCG). The propeptide occupies 25-34 (RSVEELGRRL). The segment at 57–68 (RFFLHHLIAEIH) is important for receptor binding. The segment at 74 to 177 (ATSEVSPNSK…TSLELNLRRH (104 aa)) is disordered. The span at 76–90 (SEVSPNSKPAPNTKN) shows a compositional bias: polar residues. Positions 108–129 (TNKVETYKEQPLKTPGKKKKGK) match the Nuclear localization signal motif. A compositionally biased stretch (basic and acidic residues) spans 109–118 (NKVETYKEQP). The span at 122–132 (PGKKKKGKPGK) shows a compositional bias: basic residues.

This sequence belongs to the parathyroid hormone family. PTHrP interacts with PTH1R (via N-terminal extracellular domain). There are several secretory forms, including osteostatin, arising from endoproteolytic cleavage of the initial translation product. Each of these secretory forms is believed to have one or more of its own receptors that mediates the normal paracrine, autocrine and endocrine actions.

It is found in the secreted. The protein resides in the cytoplasm. It localises to the nucleus. In terms of biological role, neuroendocrine peptide which is a critical regulator of cellular and organ growth, development, migration, differentiation and survival and of epithelial calcium ion transport. Acts by binding to its receptor, PTH1R, activating G protein-coupled receptor signaling. Regulates endochondral bone development and epithelial-mesenchymal interactions during the formation of the mammary glands and teeth. Required for skeletal homeostasis. Promotes mammary mesenchyme differentiation and bud outgrowth by modulating mesenchymal cell responsiveness to BMPs. Up-regulates BMPR1A expression in the mammary mesenchyme and this increases the sensitivity of these cells to BMPs and allows them to respond to BMP4 in a paracrine and/or autocrine fashion. BMP4 signaling in the mesenchyme, in turn, triggers epithelial outgrowth and augments MSX2 expression, which causes the mammary mesenchyme to inhibit hair follicle formation within the nipple sheath. Its function is as follows. Potent inhibitor of osteoclastic bone resorption. The sequence is that of Parathyroid hormone-related protein (PTHLH) from Canis lupus familiaris (Dog).